The sequence spans 328 residues: Arabinose 5-phosphate isomerase KdsD (328 aa).

Residues 42-184 (CEKMFWCKGK…AVALLKARGF (143 aa)) enclose the SIS domain. Residues 75-76 (GT), His-82, His-88, 114-123 (ALIPVLKRLH), 148-150 (KVA), Thr-222, and Asp-275 contribute to the substrate site. His-82 contributes to the Zn(2+) binding site. The CBS 1 domain occupies 210–268 (MHTGDEIPHVKKTASLRDALLEVTRKNLGMTVICDDNMMIEGIFTDGDLRRVFDMGVDV). Residues 277-328 (MTPGGIRVRPGILAVEALNLMQSRHITSVMVADGDHLLGVLHMHDLLRAGVV) form the CBS 2 domain.

The protein belongs to the SIS family. GutQ/KpsF subfamily. Homotetramer.

The catalysed reaction is D-arabinose 5-phosphate = D-ribulose 5-phosphate. The protein operates within carbohydrate biosynthesis; 3-deoxy-D-manno-octulosonate biosynthesis; 3-deoxy-D-manno-octulosonate from D-ribulose 5-phosphate: step 1/3. It participates in bacterial outer membrane biogenesis; lipopolysaccharide biosynthesis. Involved in the biosynthesis of 3-deoxy-D-manno-octulosonate (KDO), a unique 8-carbon sugar component of lipopolysaccharides (LPSs). Catalyzes the reversible aldol-ketol isomerization between D-ribulose 5-phosphate (Ru5P) and D-arabinose 5-phosphate (A5P). The protein is Arabinose 5-phosphate isomerase KdsD (kdsD) of Escherichia coli O6:H1 (strain CFT073 / ATCC 700928 / UPEC).